Consider the following 182-residue polypeptide: Adenine phosphoribosyltransferase (182 aa).

This sequence belongs to the purine/pyrimidine phosphoribosyltransferase family. As to quaternary structure, homodimer.

It localises to the cytoplasm. The enzyme catalyses AMP + diphosphate = 5-phospho-alpha-D-ribose 1-diphosphate + adenine. It participates in purine metabolism; AMP biosynthesis via salvage pathway; AMP from adenine: step 1/1. Functionally, catalyzes a salvage reaction resulting in the formation of AMP, that is energically less costly than de novo synthesis. The chain is Adenine phosphoribosyltransferase from Bordetella avium (strain 197N).